We begin with the raw amino-acid sequence, 452 residues long: MERRIFGLETEYGVTCTYRGQRRLSPDEVARYLFRRVVSWGRSSNVFLRNGARLYLDVGSHPEYATPECDSVADLVAHDRAGERILEGLLVDAEKRLHDEGIAGEIYLFKNNTDSAGNSYGCHENYLVSRHGEFGRLADVLIPFLVTRQLICGAGKVLQTPRGAVYCLSQRAEHIWEGVSSATTRSRPIINTRDEPHADAERYRRLHVIVGDSNMNEVTTLLKVGAADIVLRMIESGVVMRDLTLENPIRAIREVSHDITGRRKVRLASGKEISALEIQQEYLAKATEFVERRGGDQTAKRVVELWGRVLRAVETGDLDPVAREIDWVTKLRLIERYQGKHDLPLSHPRVAQMDLAYHDLRRGRGLYGLLERRGQVDRAATDPEIFEAKETPPQTTRARLRGEFIRHAQEKRRDFTVDWVHLKLNDQAQRTVLCKDPFRAYDERVERLIASM.

Residue Glu9 coordinates Mg(2+). Arg53 is a binding site for ATP. Tyr55 is a binding site for Mg(2+). Asp57 (proton acceptor) is an active-site residue. Position 63 (Glu63) interacts with Mg(2+). ATP contacts are provided by Thr66 and Trp419.

Belongs to the Pup ligase/Pup deamidase family. Pup-conjugating enzyme subfamily.

The enzyme catalyses ATP + [prokaryotic ubiquitin-like protein]-L-glutamate + [protein]-L-lysine = ADP + phosphate + N(6)-([prokaryotic ubiquitin-like protein]-gamma-L-glutamyl)-[protein]-L-lysine.. Its pathway is protein degradation; proteasomal Pup-dependent pathway. The protein operates within protein modification; protein pupylation. In terms of biological role, catalyzes the covalent attachment of the prokaryotic ubiquitin-like protein modifier Pup to the proteasomal substrate proteins, thereby targeting them for proteasomal degradation. This tagging system is termed pupylation. The ligation reaction involves the side-chain carboxylate of the C-terminal glutamate of Pup and the side-chain amino group of a substrate lysine. This is Pup--protein ligase from Salinispora arenicola (strain CNS-205).